The chain runs to 440 residues: Tryptophan synthase beta chain 2 (440 aa).

Lys-110 bears the N6-(pyridoxal phosphate)lysine mark.

It belongs to the TrpB family. In terms of assembly, tetramer of two alpha and two beta chains. It depends on pyridoxal 5'-phosphate as a cofactor.

The enzyme catalyses (1S,2R)-1-C-(indol-3-yl)glycerol 3-phosphate + L-serine = D-glyceraldehyde 3-phosphate + L-tryptophan + H2O. The protein operates within amino-acid biosynthesis; L-tryptophan biosynthesis; L-tryptophan from chorismate: step 5/5. Functionally, the beta subunit is responsible for the synthesis of L-tryptophan from indole and L-serine. The protein is Tryptophan synthase beta chain 2 (trpB2) of Pyrococcus abyssi (strain GE5 / Orsay).